The following is a 188-amino-acid chain: Cytidylate kinase (188 aa).

Position 7–15 (7–15 (GKIGSGKST)) interacts with ATP.

The protein belongs to the cytidylate kinase family. Type 2 subfamily.

Its subcellular location is the cytoplasm. It carries out the reaction CMP + ATP = CDP + ADP. It catalyses the reaction dCMP + ATP = dCDP + ADP. The protein is Cytidylate kinase (cmk) of Thermoplasma acidophilum (strain ATCC 25905 / DSM 1728 / JCM 9062 / NBRC 15155 / AMRC-C165).